The sequence spans 593 residues: Arginine--tRNA ligase (593 aa).

The short motif at 138–148 (ANPTGPLHVGH) is the 'HIGH' region element.

The protein belongs to the class-I aminoacyl-tRNA synthetase family. Monomer.

The protein localises to the cytoplasm. The catalysed reaction is tRNA(Arg) + L-arginine + ATP = L-arginyl-tRNA(Arg) + AMP + diphosphate. This is Arginine--tRNA ligase from Burkholderia orbicola (strain MC0-3).